Reading from the N-terminus, the 152-residue chain is Superoxide dismutase [Cu-Zn] (152 aa).

Positions 45, 47, and 62 each coordinate Cu cation. Residues Cys-56 and Cys-145 are joined by a disulfide bond. Residues His-62, His-70, His-79, and Asp-82 each contribute to the Zn(2+) site. His-119 contacts Cu cation.

It belongs to the Cu-Zn superoxide dismutase family. In terms of assembly, homodimer. Cu cation serves as cofactor. Zn(2+) is required as a cofactor.

It is found in the cytoplasm. It catalyses the reaction 2 superoxide + 2 H(+) = H2O2 + O2. Functionally, destroys radicals which are normally produced within the cells and which are toxic to biological systems. In Capsicum annuum (Capsicum pepper), this protein is Superoxide dismutase [Cu-Zn] (SODCC).